The following is a 768-amino-acid chain: Integrin beta-8 (768 aa).

The first 42 residues, 1–42 (MCGSALGLPPAAFVRLRSCRPGPAAFLRAAWVLSLVLGLGRS), serve as a signal peptide directing secretion. The Extracellular segment spans residues 43-683 (ENSRCASSHA…ECFSSPSYLR (641 aa)). Residues 46 to 95 (RCASSHAVSCSECLALGPDCGWCVHEDFISGGPRSERCDIVSNLISKGCP) form the PSI domain. Disulfide bonds link Cys-47–Cys-65, Cys-55–Cys-469, Cys-58–Cys-83, Cys-68–Cys-94, Cys-211–Cys-218, Cys-266–Cys-307, Cys-407–Cys-419, Cys-439–Cys-467, Cys-471–Cys-491, Cys-471–Cys-494, Cys-481–Cys-494, Cys-499–Cys-528, Cys-511–Cys-526, Cys-520–Cys-531, Cys-533–Cys-546, Cys-553–Cys-567, Cys-561–Cys-572, Cys-574–Cys-583, Cys-585–Cys-609, Cys-593–Cys-607, Cys-601–Cys-612, Cys-614–Cys-624, Cys-627–Cys-630, Cys-634–Cys-661, and Cys-640–Cys-657. In terms of domain architecture, VWFA spans 146 to 384 (PVDLYYLVDV…NLVVEAYQKL (239 aa)). Positions 154 and 156 each coordinate Mg(2+). A Ca(2+)-binding site is contributed by Asp-193. N-linked (GlcNAc...) asparagine glycosylation is present at Asn-233. Asn-249, Asp-251, Pro-253, and Glu-254 together coordinate Ca(2+). Position 254 (Glu-254) interacts with Mg(2+). Residue Asn-402 is glycosylated (N-linked (GlcNAc...) asparagine). N-linked (GlcNAc...) asparagine glycosylation is found at Asn-421, Asn-431, and Asn-456. 4 I-EGF domains span residues 471-495 (CEAS…PQCQ), 499-547 (CHQE…KYCE), 548-584 (KDDF…DRCQ), and 585-625 (CPSA…RFCE). Asn-648 carries N-linked (GlcNAc...) asparagine glycosylation. Residues 684-703 (IFFIIFIVTFLIGLLKILII) traverse the membrane as a helical segment. Over 704 to 768 (RQVILQWNSS…NAHETFRCNF (65 aa)) the chain is Cytoplasmic.

The protein belongs to the integrin beta chain family. Heterodimer of an alpha and a beta subunit. Beta-8 (ITGB8) associates with alpha-V (ITGAV) to form ITGAV:ITGB8. ITGAV:ITGB8 interacts with TGFB1. Placenta, kidney, brain, ovary, uterus and in several transformed cells.

It is found in the cell membrane. Integrin alpha-V:beta-8 (ITGAV:ITGB8) is a receptor for fibronectin. It recognizes the sequence R-G-D in its ligands. Integrin alpha-V:beta-6 (ITGAV:ITGB6) mediates R-G-D-dependent release of transforming growth factor beta-1 (TGF-beta-1) from regulatory Latency-associated peptide (LAP), thereby playing a key role in TGF-beta-1 activation on the surface of activated regulatory T-cells (Tregs). Required during vasculogenesis. The sequence is that of Integrin beta-8 (ITGB8) from Oryctolagus cuniculus (Rabbit).